The following is a 1888-amino-acid chain: Nuclear pore membrane glycoprotein 210-like (1888 aa).

Positions 1-35 (MTGCPASSRRRGFGLFFFLRLHRLLLLFLVLRGTL) are cleaved as a signal peptide. N-linked (GlcNAc...) asparagine glycosylation is found at Asn-84, Asn-304, Asn-348, Asn-495, Asn-522, Asn-812, and Asn-931. One can recognise a BIG2 domain in the interval 1082–1154 (FPPFRLLPEK…TIQTVNEDTG (73 aa)). A glycan (N-linked (GlcNAc...) asparagine) is linked at Asn-1445. A helical membrane pass occupies residues 1813 to 1833 (ILLLTLFAVLASTASIFLAYN). An N-linked (GlcNAc...) asparagine glycan is attached at Asn-1859.

Belongs to the NUP210 family.

The protein localises to the nucleus membrane. This chain is Nuclear pore membrane glycoprotein 210-like (NUP210L), found in Homo sapiens (Human).